A 1024-amino-acid chain; its full sequence is Integrator complex subunit 7 homolog (1024 aa).

Polar residues-rich tracts occupy residues 1-11 (MSKYKNSSLLN) and 19-36 (PSLSNGSSVLGISNQLPP). Disordered stretches follow at residues 1-109 (MSKY…PTNS), 472-502 (DNNNNNNNNNNNNNNNNNNNNNNNNNNNNNN), and 842-863 (NNNNNNNNNNNNNNNNNNNNNN). Low complexity-rich tracts occupy residues 44–77 (STNNQQSTTTPTTVTIQPPSSSISTPSPTTNNTV), 85–96 (TAGSSTSSASSV), and 473–502 (NNNNNNNNNNNNNNNNNNNNNNNNNNNNNN).

This sequence belongs to the Integrator subunit 7 family. As to quaternary structure, component of the Integrator complex. The core complex associates with protein phosphatase 2A subunits, to form the Integrator-PP2A (INTAC) complex.

It localises to the nucleus. Its subcellular location is the chromosome. The protein resides in the cytoplasm. Its function is as follows. Component of the integrator complex, a multiprotein complex that terminates RNA polymerase II (Pol II) transcription in the promoter-proximal region of genes. The integrator complex provides a quality checkpoint during transcription elongation by driving premature transcription termination of transcripts that are unfavorably configured for transcriptional elongation: the complex terminates transcription by (1) catalyzing dephosphorylation of the C-terminal domain (CTD) of Pol II subunit polr2a, (2) degrading the exiting nascent RNA transcript via endonuclease activity and (3) promoting the release of Pol II from bound DNA. The integrator complex is also involved in terminating the synthesis of non-coding Pol II transcripts, such as enhancer RNAs (eRNAs), small nuclear RNAs (snRNAs), telomerase RNAs and long non-coding RNAs (lncRNAs). This is Integrator complex subunit 7 homolog (ints7) from Dictyostelium discoideum (Social amoeba).